A 152-amino-acid chain; its full sequence is Outer membrane protein assembly factor BamE (152 aa).

The signal sequence occupies residues methionine 1–glycine 32. Cysteine 33 carries the N-palmitoyl cysteine lipid modification. Cysteine 33 carries the S-diacylglycerol cysteine lipid modification. Residues isoleucine 114–glutamate 152 form a disordered region.

The protein belongs to the BamE family. Part of the Bam complex.

Its subcellular location is the cell outer membrane. Its function is as follows. Part of the outer membrane protein assembly complex, which is involved in assembly and insertion of beta-barrel proteins into the outer membrane. The polypeptide is Outer membrane protein assembly factor BamE (Halomonas elongata (strain ATCC 33173 / DSM 2581 / NBRC 15536 / NCIMB 2198 / 1H9)).